Here is a 1510-residue protein sequence, read N- to C-terminus: Chromosome partition protein MukB (1510 aa).

Positions 6–30 (ELENEIELESDEVIMENENVEEIVD) form a coiled coil. Position 75 to 82 (75 to 82 (GGNGAGKS)) interacts with ATP. Coiled-coil stretches lie at residues 346-506 (QHRL…HKMS), 553-633 (QQTP…NLTA), 673-706 (MQSQ…RLSQ), 821-847 (RAAR…QIAF), 876-1064 (EELM…IQLQ), 1094-1149 (ERAR…RELV), and 1249-1305 (DAIE…QNIS). Residues 707 to 824 (PDGSEDPRLN…EIPLFGRAAR (118 aa)) are flexible hinge.

The protein belongs to the SMC family. MukB subfamily. As to quaternary structure, homodimerization via its hinge domain. Binds to DNA via its C-terminal region. Interacts, and probably forms a ternary complex, with MukE and MukF via its C-terminal region. The complex formation is stimulated by calcium or magnesium. Interacts with tubulin-related protein FtsZ.

It localises to the cytoplasm. The protein localises to the nucleoid. In terms of biological role, plays a central role in chromosome condensation, segregation and cell cycle progression. Functions as a homodimer, which is essential for chromosome partition. Involved in negative DNA supercoiling in vivo, and by this means organize and compact chromosomes. May achieve or facilitate chromosome segregation by condensation DNA from both sides of a centrally located replisome during cell division. The chain is Chromosome partition protein MukB from Haemophilus influenzae (strain 86-028NP).